A 189-amino-acid polypeptide reads, in one-letter code: Movement protein (189 aa).

This sequence belongs to the tombusvirus/aureusvirus movement protein p22 family. In terms of assembly, interacts with host protein HFI22. Post-translationally, phosphorylated.

The protein localises to the host membrane. Its function is as follows. Transports viral genome to neighboring plant cells directly through plasmosdesmata, without any budding. The movement protein allows efficient cell to cell propagation, by bypassing the host cell wall barrier. This Capsicum annuum (Capsicum pepper) protein is Movement protein.